The following is a 137-amino-acid chain: Peptide methionine sulfoxide reductase MsrB (137 aa).

Residues 7–129 (AEELKKKLSE…NSASLAFSDE (123 aa)) form the MsrB domain. Zn(2+)-binding residues include C46, C49, C95, and C98. C118 functions as the Nucleophile in the catalytic mechanism.

It belongs to the MsrB Met sulfoxide reductase family. Zn(2+) serves as cofactor.

It carries out the reaction L-methionyl-[protein] + [thioredoxin]-disulfide + H2O = L-methionyl-(R)-S-oxide-[protein] + [thioredoxin]-dithiol. This is Peptide methionine sulfoxide reductase MsrB from Salmonella agona (strain SL483).